The following is a 278-amino-acid chain: Large ribosomal subunit protein uL2 (278 aa).

Residues Gly-222–Lys-278 form a disordered region.

Belongs to the universal ribosomal protein uL2 family. As to quaternary structure, part of the 50S ribosomal subunit. Forms a bridge to the 30S subunit in the 70S ribosome.

Functionally, one of the primary rRNA binding proteins. Required for association of the 30S and 50S subunits to form the 70S ribosome, for tRNA binding and peptide bond formation. It has been suggested to have peptidyltransferase activity; this is somewhat controversial. Makes several contacts with the 16S rRNA in the 70S ribosome. This is Large ribosomal subunit protein uL2 from Rhodopseudomonas palustris (strain BisB5).